Here is a 349-residue protein sequence, read N- to C-terminus: MNIQQALNHITKNIHLTQPQMEEIMRSIMQGEATEAQIGALMMGLRMKGESIDEMTAAARVMREFAIKIDVSDIKHLVDIVGTGGDGQNLFNVSTASSFVIAAAGATIAKHGNRGVSSKSGSSDLLEQAGIHLDLDMQQTERCIREMGVGFLFAPNHHKAMKYAAGPRRELGIRSIFNLLGPLTNPAGVKRFVIGVFSDELCRPIAEVMKQLGAEHVMVVHSKDGLDEISLAAPTTIAELKDGEITEWTLNPEDVGIESQTLNGLVVADATASLKLIKDALSKNKSDIGEKAANMIALNAGAGIYVAGITKTYAQAVVFAQDIIYGGQTLEKMSVLAEFTKTLKQSQAD.

5-phospho-alpha-D-ribose 1-diphosphate contacts are provided by residues G82, 85–86, 92–95, 110–118, and S122; these read GD, NVST, and KHGNRGVSS. An anthranilate-binding site is contributed by G82. S94 is a binding site for Mg(2+). An anthranilate-binding site is contributed by N113. Residue R168 participates in anthranilate binding. Residues D227 and E228 each coordinate Mg(2+).

The protein belongs to the anthranilate phosphoribosyltransferase family. In terms of assembly, homodimer. Requires Mg(2+) as cofactor.

It carries out the reaction N-(5-phospho-beta-D-ribosyl)anthranilate + diphosphate = 5-phospho-alpha-D-ribose 1-diphosphate + anthranilate. The protein operates within amino-acid biosynthesis; L-tryptophan biosynthesis; L-tryptophan from chorismate: step 2/5. Functionally, catalyzes the transfer of the phosphoribosyl group of 5-phosphorylribose-1-pyrophosphate (PRPP) to anthranilate to yield N-(5'-phosphoribosyl)-anthranilate (PRA). This is Anthranilate phosphoribosyltransferase from Acinetobacter baumannii (strain SDF).